Reading from the N-terminus, the 294-residue chain is Cuticle collagen 144 (294 aa).

The first 30 residues, 1 to 30 (MEKILVTISTGAASFAVLAVLFTIPSLYNT), serve as a signal peptide directing secretion. Residues 100–112 (TCPPGPPGPPGQP) show a composition bias toward pro residues. Disordered regions lie at residues 100-134 (TCPPGPPGPPGQPGQPGTPGAPGPKGEDNTSTYAP) and 148-278 (PQGP…GNDA). Triple-helical region stretches follow at residues 102–127 (PPGPPGPPGQPGQPGTPGAPGPKGED) and 153–274 (GPEG…PGLP). Low complexity-rich tracts occupy residues 164–209 (AGPD…PGQD) and 219–265 (APGA…DGQP).

Collagen polypeptide chains are complexed within the cuticle by disulfide bonds and other types of covalent cross-links.

Its function is as follows. Nematode cuticles are composed largely of collagen-like proteins. The cuticle functions both as an exoskeleton and as a barrier to protect the worm from its environment. In Caenorhabditis briggsae, this protein is Cuticle collagen 144.